Consider the following 78-residue polypeptide: Putative DPH3 homolog B (78 aa).

The region spanning 4–60 (FHDEVEIEDFQYDEDSETYFCPCPCGDNFSITKEELENGEGVAMCPGCSLIIKVIYD) is the DPH-type MB domain. 4 residues coordinate Zn(2+): Cys-26, Cys-28, Cys-48, and Cys-51.

The protein belongs to the DPH3 family.

This is Putative DPH3 homolog B (DPH3P1) from Homo sapiens (Human).